A 1427-amino-acid chain; its full sequence is DNA-directed RNA polymerase subunit beta' (1427 aa).

Residues C70, C72, C85, and C88 each contribute to the Zn(2+) site. The Mg(2+) site is built by D461, D463, and D465. C810, C884, C891, and C894 together coordinate Zn(2+). Disordered regions lie at residues 1044-1065 and 1394-1427; these read QTDE…AGRG and PEAA…GDEA.

The protein belongs to the RNA polymerase beta' chain family. As to quaternary structure, the RNAP catalytic core consists of 2 alpha, 1 beta, 1 beta' and 1 omega subunit. When a sigma factor is associated with the core the holoenzyme is formed, which can initiate transcription. The cofactor is Mg(2+). Zn(2+) is required as a cofactor.

It catalyses the reaction RNA(n) + a ribonucleoside 5'-triphosphate = RNA(n+1) + diphosphate. Functionally, DNA-dependent RNA polymerase catalyzes the transcription of DNA into RNA using the four ribonucleoside triphosphates as substrates. The sequence is that of DNA-directed RNA polymerase subunit beta' from Novosphingobium aromaticivorans (strain ATCC 700278 / DSM 12444 / CCUG 56034 / CIP 105152 / NBRC 16084 / F199).